The following is a 277-amino-acid chain: uncharacterized protein (277 aa).

Residues 1–20 (MVTTSPPPTLTNSVQPHPTT) are disordered.

This is an uncharacterized protein from Acidianus convivator (ATV).